A 246-amino-acid polypeptide reads, in one-letter code: MYPEFEVVPAVDMQDGQVVQLVGGERGTEKTYGDPVEAAQRWVDAGARTLHLVDLDGAFEGERQNAAAIDAVLDAVGADVDVQLGGGIRTAEDAVSLLDRGLDRVILGTAAVETPEIVGEISDEHPGSVLVSLDAKDGEVVVSGWTEGTGLDPADAAGRYADLGAGGILFTDVDVEGQLDGVRTDPVRRLVDSVDIPVIASGGVATINDVLALRSAGAAAVVVGSALYEGQFTLDAAIDALGESSE.

The Proton acceptor role is filled by D12. The active-site Proton donor is D134.

This sequence belongs to the HisA/HisF family.

Its subcellular location is the cytoplasm. It catalyses the reaction 1-(5-phospho-beta-D-ribosyl)-5-[(5-phospho-beta-D-ribosylamino)methylideneamino]imidazole-4-carboxamide = 5-[(5-phospho-1-deoxy-D-ribulos-1-ylimino)methylamino]-1-(5-phospho-beta-D-ribosyl)imidazole-4-carboxamide. Its pathway is amino-acid biosynthesis; L-histidine biosynthesis; L-histidine from 5-phospho-alpha-D-ribose 1-diphosphate: step 4/9. This Haloarcula marismortui (strain ATCC 43049 / DSM 3752 / JCM 8966 / VKM B-1809) (Halobacterium marismortui) protein is 1-(5-phosphoribosyl)-5-[(5-phosphoribosylamino)methylideneamino] imidazole-4-carboxamide isomerase.